We begin with the raw amino-acid sequence, 321 residues long: MTYKQRNTNQLAIDLITLSRFNRYNPLLATFSGVWATILAGSHKITHSPNSVTSEYVLSQALLCFICSFVFCGAGMVWNDWIDLHIDRQVARTKGRPLARGAVTTSEALVWMAFQFISSWVLVSWMLEGENVQAAMLPVTLSTILYPFAKRPIFRRLHIYPQYLLGFTLAYPSLIGTLAIKPEGNAQPLWASINQSLPMFVTVFTWTLYLNTAYSYQDVVDDQKMNVNSAYVLAGSYIHHLLVVLAVLVLGAVGWQLYGQESQWLWGGWMGVWTWSFLGQLVRFDKSRPESGGPLHKENFALGVWTVFVCVVELLIGGNGC.

The next 9 membrane-spanning stretches (helical) occupy residues 26–46, 57–77, 107–127, 132–149, 159–179, 189–209, 232–252, 262–282, and 300–320; these read PLLA…HKIT, VLSQ…AGMV, EALV…SWML, VQAA…YPFA, IYPQ…GTLA, LWAS…WTLY, VLAG…VLGA, SQWL…GQLV, and FALG…GGNG.

This sequence belongs to the UbiA prenyltransferase family. Requires Mg(2+) as cofactor.

The protein localises to the membrane. Its pathway is secondary metabolite biosynthesis; terpenoid biosynthesis. In terms of biological role, polyprenyl transferase; part of the cluster A that mediates the biosynthesis of chevalone E and its oxidized derivatives that possess a unique five-membered lactone ring and can synergistically enhance the cytotoxicity of doxorubicin (DOX) in breast cancer cells. Within the pathway, cle5 takes part to the biosynthesis of the molecular scaffold by catalyzing the C-3 geranylgeranylation reaction of triacetic acid lactone (TAL) produced by cle1. The molecular scaffold is commonly biosynthesized by a series of enzymes including the non-reducing polyketide synthase (NR-PKS) cle1 that produces the alpha-pyrone triacetic acid lactone (TAL); The membrane-bound prenyltransferase cle5 that accepts TAL as its substrate to perform a C-3 geranylgeranylation reaction, in which the pathway-dedicated GGPS cle6 is required to provide GGPP, the other substrate of cle5; the FAD-dependent monooxygenase Cle3 that forms an (S)-epoxide ring at the terminal olefin of the geranylgeranyl group; and the terpene cyclase Cle7 that catalyzes the cyclization of the prenyl group that yields the pentacyclic pathway intermediate chevalone E. Chevalone E can derivatize into seven new oxidized analogs by the cytochrome P450 monooxygenases cle2 (acting at C-20) and cle4 (acting at C-11 and C-12). The chain is Polyprenyl transferase cle5 from Aspergillus versicolor.